The following is a 360-amino-acid chain: Phospho-N-acetylmuramoyl-pentapeptide-transferase (360 aa).

Over 1 to 25 (MLVWLAEHLVKYYSGFNVFSYLTFR) the chain is Periplasmic. A helical transmembrane segment spans residues 26-46 (AIVSLLTALFISLWMGPRMIA). Topologically, residues 47 to 71 (HLQKLSFGQVVRNDGPESHFSKRGT) are cytoplasmic. The chain crosses the membrane as a helical span at residues 72 to 92 (PTMGGIMILTAIVISVLLWAY). Pro93 is a topological domain (periplasmic). Residues 94-114 (SNPYVWCVLVVLVGYGVIGFV) traverse the membrane as a helical segment. The Cytoplasmic portion of the chain corresponds to 115-131 (DDYRKVVRKDTKGLIAR). A helical transmembrane segment spans residues 132 to 152 (WKYFWMSVIALGVAFALYLAG). The Periplasmic portion of the chain corresponds to 153–167 (KDTPATQLVVPFFKD). The helical transmembrane segment at 168–188 (VMPQLGLFYILLAYFVIVGTG) threads the bilayer. Residues 189-198 (NAVNLTDGLD) are Cytoplasmic-facing. Residues 199-219 (GLAIMPTVFVAGGFALVAWAT) traverse the membrane as a helical segment. The Periplasmic segment spans residues 220-235 (GNMNFASYLHIPYLRH). Residues 236–256 (AGELVIVCTAIVGAGLGFLWF) form a helical membrane-spanning segment. At 257–262 (NTYPAQ) the chain is on the cytoplasmic side. A helical membrane pass occupies residues 263 to 283 (VFMGDVGSLALGGALGIIAVL). Topologically, residues 284–287 (LRQE) are periplasmic. Residues 288 to 308 (FLLVIMGGVFVVETLSVILQV) traverse the membrane as a helical segment. The Cytoplasmic segment spans residues 309-337 (GSFKLRGQRIFRMAPIHHHYELKGWPEPR). Residues 338 to 358 (VIVRFWIISLMLVLIGLATLK) form a helical membrane-spanning segment. Topologically, residues 359-360 (VR) are periplasmic.

It belongs to the glycosyltransferase 4 family. MraY subfamily. Mg(2+) is required as a cofactor.

Its subcellular location is the cell inner membrane. The enzyme catalyses UDP-N-acetyl-alpha-D-muramoyl-L-alanyl-gamma-D-glutamyl-meso-2,6-diaminopimeloyl-D-alanyl-D-alanine + di-trans,octa-cis-undecaprenyl phosphate = di-trans,octa-cis-undecaprenyl diphospho-N-acetyl-alpha-D-muramoyl-L-alanyl-D-glutamyl-meso-2,6-diaminopimeloyl-D-alanyl-D-alanine + UMP. It participates in cell wall biogenesis; peptidoglycan biosynthesis. Catalyzes the initial step of the lipid cycle reactions in the biosynthesis of the cell wall peptidoglycan: transfers peptidoglycan precursor phospho-MurNAc-pentapeptide from UDP-MurNAc-pentapeptide onto the lipid carrier undecaprenyl phosphate, yielding undecaprenyl-pyrophosphoryl-MurNAc-pentapeptide, known as lipid I. The polypeptide is Phospho-N-acetylmuramoyl-pentapeptide-transferase (Shigella boydii serotype 18 (strain CDC 3083-94 / BS512)).